We begin with the raw amino-acid sequence, 72 residues long: Protein LITTLE ZIPPER 4 (72 aa).

Residues 14 to 44 are a coiled coil; the sequence is YIIKENERLRKKAQILNQENQQLLFELKQKL. The segment at 42–72 is disordered; that stretch reads QKLSKTKNSSGSNQGNNNNNNNLSSSSSASG. Residues 49-72 show a composition bias toward low complexity; it reads NSSGSNQGNNNNNNNLSSSSSASG.

In terms of assembly, interacts with REV.

Competitive inhibitor of the HD-ZIPIII transcription factors in shoot apical meristem (SAM) development. Acts by forming non-functional heterodimers. Part of a negative feedback loop. Essential for proper functioning of stem cells in the SAM. In Arabidopsis thaliana (Mouse-ear cress), this protein is Protein LITTLE ZIPPER 4.